The following is a 510-amino-acid chain: Gelatinase (510 aa).

The N-terminal stretch at 1–30 is a signal peptide; the sequence is MMKGNKILYILGTGIFVGSSCLFSSLFVAA. The propeptide occupies 31–192; sequence EEQVYSESEV…IMEKQDLTEH (162 aa). Asp-324 serves as a coordination point for Ca(2+). Residue His-328 coordinates Zn(2+). Glu-329 is a catalytic residue. Zn(2+)-binding residues include His-332 and Glu-352. Ser-376 contributes to the Ca(2+) binding site. His-419 functions as the Proton donor in the catalytic mechanism.

This sequence belongs to the peptidase M4 family.

The protein resides in the secreted. It catalyses the reaction Preferential cleavage: Xaa-|-Leu, Xaa-|-Phe, Xaa-|-Tyr, Xaa-|-Ala.. Inhibited by L-leucine hydroxamate and phosphoramidon. Not inhibited by phenylmethanesulfonyl fluoride. Reversibly inactivated by straight-chain aliphatic alcohols. Its function is as follows. Metalloprotease capable of the hydrolysis of insoluble hydrophobic substrates. Hydrolyzes azocoll and gelatin and, at a lower rate, soluble and insoluble collagens. Does not cleave short synthetic peptides. Preferentially hydrolyzes the 24-Phe-|-Phe-25 bond in the insulin B-chain, followed by the 5-His-|-Leu-6 bond. Inactivates endothelin-1, primarily by cleavage of the 5-Ser-|-Leu-6 and 16-His-|-Leu-17 bonds. Hydrolyzes the alpha chain of C3 to generate a C3b-like protein. Inhibits complement-mediated hemolysis and opsinization of bacteria. Hydrolyzes the insect antimicrobial peptide cecropin. Decreases the length of E.faecalis chains via the activation of autolysin. Degrades polymerized fibrin. The sequence is that of Gelatinase from Enterococcus faecalis (strain ATCC 700802 / V583).